The following is a 600-amino-acid chain: Elongation factor 4 (600 aa).

The tr-type G domain maps to 6 to 188; that stretch reads QFIRNFSIIA…QITKQIPSPK (183 aa). GTP-binding positions include 18-23 and 135-138; these read DHGKST and NKID.

Belongs to the TRAFAC class translation factor GTPase superfamily. Classic translation factor GTPase family. LepA subfamily.

It localises to the cell inner membrane. The enzyme catalyses GTP + H2O = GDP + phosphate + H(+). Functionally, required for accurate and efficient protein synthesis under certain stress conditions. May act as a fidelity factor of the translation reaction, by catalyzing a one-codon backward translocation of tRNAs on improperly translocated ribosomes. Back-translocation proceeds from a post-translocation (POST) complex to a pre-translocation (PRE) complex, thus giving elongation factor G a second chance to translocate the tRNAs correctly. Binds to ribosomes in a GTP-dependent manner. In Leptospira interrogans serogroup Icterohaemorrhagiae serovar copenhageni (strain Fiocruz L1-130), this protein is Elongation factor 4.